We begin with the raw amino-acid sequence, 298 residues long: Tyrosine recombinase XerC (298 aa).

One can recognise a Core-binding (CB) domain in the interval 2–88 (TDLHTDVERY…ALRSFFDWLV (87 aa)). The 180-residue stretch at 109-288 (HLPKNIDVDD…DFQHLASVYD (180 aa)) folds into the Tyr recombinase domain. Active-site residues include Arg-148, Lys-172, His-240, Arg-243, and His-266. Tyr-275 functions as the O-(3'-phospho-DNA)-tyrosine intermediate in the catalytic mechanism.

This sequence belongs to the 'phage' integrase family. XerC subfamily. As to quaternary structure, forms a cyclic heterotetrameric complex composed of two molecules of XerC and two molecules of XerD, in which XerC interacts with XerD via its C-terminal region, XerD interacts with XerC via its C-terminal region and so on.

The protein localises to the cytoplasm. FtsK may regulate the catalytic switch between XerC and XerD in the heterotetrameric complex during the two steps of the recombination process. Functionally, site-specific tyrosine recombinase, which acts by catalyzing the cutting and rejoining of the recombining DNA molecules. Binds cooperatively to specific DNA consensus sequences that are separated from XerD binding sites by a short central region, forming the heterotetrameric XerC-XerD complex that recombines DNA substrates. The complex is essential to convert dimers of the bacterial chromosome into monomers to permit their segregation at cell division. It also contributes to the segregational stability of plasmids. In the complex XerC specifically exchanges the top DNA strands. The chain is Tyrosine recombinase XerC from Escherichia coli O127:H6 (strain E2348/69 / EPEC).